The chain runs to 693 residues: Sulfite reductase 1 [ferredoxin], chloroplastic (693 aa).

The N-terminal 62 residues, 1-62 (MTTSFGAAIN…PSSIVRAVST (62 aa)), are a transit peptide targeting the chloroplast. 4 residues coordinate [4Fe-4S] cluster: cysteine 502, cysteine 508, cysteine 548, and cysteine 552. Siroheme is bound at residue cysteine 552.

Belongs to the nitrite and sulfite reductase 4Fe-4S domain family. In terms of assembly, monomer. Interacts with ferredoxin. Siroheme is required as a cofactor. Requires [4Fe-4S] cluster as cofactor. Post-translationally, phosphorylated; this phosphorylation reduces DNA-binding. As to expression, expressed in leaves, stems, roots and petals.

The protein localises to the plastid. Its subcellular location is the chloroplast stroma. The protein resides in the chloroplast nucleoid. It is found in the plastid stroma. The enzyme catalyses hydrogen sulfide + 6 oxidized [2Fe-2S]-[ferredoxin] + 3 H2O = sulfite + 6 reduced [2Fe-2S]-[ferredoxin] + 7 H(+). Its function is as follows. Essential protein with sulfite reductase activity required in assimilatory sulfate reduction pathway during both primary and secondary metabolism and thus involved in development and growth. DNA-binding protein that binds to both double-stranded and single-stranded DNA without significant sequence specificity to reversibly repress the transcriptional activity of chloroplast nucleoids by promoting DNA compaction and possibly regulate DNA replication. The protein is Sulfite reductase 1 [ferredoxin], chloroplastic (SIR1) of Nicotiana tabacum (Common tobacco).